A 306-amino-acid polypeptide reads, in one-letter code: Tyrosine recombinase XerC (306 aa).

The Core-binding (CB) domain occupies 1–90 (MYVHIDNFLV…AWRSFYRYLY (90 aa)). The 188-residue stretch at 111-298 (RLPRFLYEDE…TGERLKKVYR (188 aa)) folds into the Tyr recombinase domain. Residues arginine 151, lysine 175, histidine 250, arginine 253, and histidine 276 contribute to the active site. The O-(3'-phospho-DNA)-tyrosine intermediate role is filled by tyrosine 285.

This sequence belongs to the 'phage' integrase family. XerC subfamily. Forms a cyclic heterotetrameric complex composed of two molecules of XerC and two molecules of XerD.

It is found in the cytoplasm. Site-specific tyrosine recombinase, which acts by catalyzing the cutting and rejoining of the recombining DNA molecules. The XerC-XerD complex is essential to convert dimers of the bacterial chromosome into monomers to permit their segregation at cell division. It also contributes to the segregational stability of plasmids. In Pelotomaculum thermopropionicum (strain DSM 13744 / JCM 10971 / SI), this protein is Tyrosine recombinase XerC.